The following is a 391-amino-acid chain: Esterase (391 aa).

The N-terminal stretch at M1–A26 is a signal peptide. Residue S41 is the Nucleophile of the active site. 3 N-linked (GlcNAc...) asparagine glycosylation sites follow: N186, N193, and N313. Catalysis depends on residues D347 and H350.

The protein belongs to the 'GDSL' lipolytic enzyme family. Post-translationally, the N-terminus is blocked. Glycosylated.

In terms of biological role, has lipase and esterase activities. May be involved in plant defense. This chain is Esterase, found in Hevea brasiliensis (Para rubber tree).